A 379-amino-acid polypeptide reads, in one-letter code: ATP phosphoribosyltransferase regulatory subunit (379 aa).

The protein belongs to the class-II aminoacyl-tRNA synthetase family. HisZ subfamily. Heteromultimer composed of HisG and HisZ subunits.

It is found in the cytoplasm. The protein operates within amino-acid biosynthesis; L-histidine biosynthesis; L-histidine from 5-phospho-alpha-D-ribose 1-diphosphate: step 1/9. Required for the first step of histidine biosynthesis. May allow the feedback regulation of ATP phosphoribosyltransferase activity by histidine. The polypeptide is ATP phosphoribosyltransferase regulatory subunit (Gluconobacter oxydans (strain 621H) (Gluconobacter suboxydans)).